We begin with the raw amino-acid sequence, 37 residues long: NAD-reducing hydrogenase HoxS subunit alpha (37 aa).

This sequence belongs to the complex I 51 kDa subunit family. As to quaternary structure, tetramer of an alpha and a gamma subunits (flavin-containing dimer), and a delta and a nickel-containing beta subunits (hydrogenase dimer). Requires FMN as cofactor. The cofactor is [4Fe-4S] cluster.

The protein localises to the cytoplasm. The enzyme catalyses H2 + NAD(+) = NADH + H(+). Subunits alpha and gamma of HoxS constitute an NADH--oxidoreductase. This is NAD-reducing hydrogenase HoxS subunit alpha (hoxF) from Rhodococcus opacus (Nocardia opaca).